A 426-amino-acid chain; its full sequence is MKQDHSAQLYDEAKSLFPGGVSSPVRAIKPFPFFTKSASGSHITDVDGNEYIDCCLAYGPLILGHGHPAVKEAITKQLENGCLYGTPSEIEVKYGKLIQKYYPGMQKLRFVNTGTEATMGAIRAARGFTGRDKIVKIEGGFHGAHDAVLVKAGSGATTIGVPDSLGVPVDVVKNTLQVPYNDIHALEETLEAHKDEIACLIMEPVMGNMGPILPKDMYLRAVRNVTRDYDVLLIFDEVITGFRVSIFGAQGYYGVEPDLTTLGKIAGGGLPIGIFGGRKDIMETVAPQGGVYQAGTYNGNPLSLTAGMATVEVLEKESVHHKVNAKGKALWQSLTDIVRGLRMEGQVTPTGIASMFQLFFGPQPENYEQALKCDKLKFNEFWKHMLQNGVFFPPSQFETNFLSLAHSQADMEQIVTACKKSLAAVK.

Position 264 is an N6-(pyridoxal phosphate)lysine (Lys-264).

The protein belongs to the class-III pyridoxal-phosphate-dependent aminotransferase family. HemL subfamily. It depends on pyridoxal 5'-phosphate as a cofactor.

The protein localises to the cytoplasm. It carries out the reaction (S)-4-amino-5-oxopentanoate = 5-aminolevulinate. The protein operates within porphyrin-containing compound metabolism; protoporphyrin-IX biosynthesis; 5-aminolevulinate from L-glutamyl-tRNA(Glu): step 2/2. In Methanocella arvoryzae (strain DSM 22066 / NBRC 105507 / MRE50), this protein is Glutamate-1-semialdehyde 2,1-aminomutase.